A 302-amino-acid chain; its full sequence is 4-hydroxy-tetrahydrodipicolinate synthase (302 aa).

Threonine 56 is a binding site for pyruvate. Catalysis depends on tyrosine 145, which acts as the Proton donor/acceptor. Lysine 173 (schiff-base intermediate with substrate) is an active-site residue. Valine 215 lines the pyruvate pocket.

The protein belongs to the DapA family. Homotetramer; dimer of dimers.

The protein localises to the cytoplasm. The catalysed reaction is L-aspartate 4-semialdehyde + pyruvate = (2S,4S)-4-hydroxy-2,3,4,5-tetrahydrodipicolinate + H2O + H(+). The protein operates within amino-acid biosynthesis; L-lysine biosynthesis via DAP pathway; (S)-tetrahydrodipicolinate from L-aspartate: step 3/4. Catalyzes the condensation of (S)-aspartate-beta-semialdehyde [(S)-ASA] and pyruvate to 4-hydroxy-tetrahydrodipicolinate (HTPA). This Prochlorococcus marinus (strain MIT 9515) protein is 4-hydroxy-tetrahydrodipicolinate synthase.